Consider the following 55-residue polypeptide: UPF0391 membrane protein Tbd_2772 (55 aa).

Helical transmembrane passes span Met-1–Ala-21 and Ala-28–Met-48.

It belongs to the UPF0391 family.

The protein resides in the cell membrane. This chain is UPF0391 membrane protein Tbd_2772, found in Thiobacillus denitrificans (strain ATCC 25259 / T1).